Reading from the N-terminus, the 373-residue chain is Cystathionine gamma-synthase/O-acetylhomoserine (thiol)-lyase (373 aa).

Lys197 is modified (N6-(pyridoxal phosphate)lysine).

Belongs to the trans-sulfuration enzymes family. As to quaternary structure, homotetramer. Pyridoxal 5'-phosphate is required as a cofactor.

The protein localises to the cytoplasm. The catalysed reaction is O-acetyl-L-homoserine + L-cysteine = L,L-cystathionine + acetate + H(+). It carries out the reaction O-acetyl-L-homoserine + hydrogen sulfide = L-homocysteine + acetate. Its pathway is amino-acid biosynthesis; L-methionine biosynthesis via de novo pathway. Catalyzes the formation of L-cystathionine from O-acetyl-L-homoserine and L-cysteine. Cannot use O-succinyl-L-homoserine as substrate. Also exhibits O-acetylhomoserine thiolyase activity, catalyzing the synthesis of L-homocysteine from O-acetyl-L-homoserine and sulfide. The sequence is that of Cystathionine gamma-synthase/O-acetylhomoserine (thiol)-lyase (metI) from Bacillus subtilis (strain 168).